The sequence spans 297 residues: 4-hydroxy-tetrahydrodipicolinate synthase (297 aa).

Threonine 49 contacts pyruvate. Tyrosine 137 serves as the catalytic Proton donor/acceptor. The Schiff-base intermediate with substrate role is filled by lysine 166. Isoleucine 208 lines the pyruvate pocket.

This sequence belongs to the DapA family. In terms of assembly, homotetramer; dimer of dimers.

Its subcellular location is the cytoplasm. It catalyses the reaction L-aspartate 4-semialdehyde + pyruvate = (2S,4S)-4-hydroxy-2,3,4,5-tetrahydrodipicolinate + H2O + H(+). Its pathway is amino-acid biosynthesis; L-lysine biosynthesis via DAP pathway; (S)-tetrahydrodipicolinate from L-aspartate: step 3/4. Catalyzes the condensation of (S)-aspartate-beta-semialdehyde [(S)-ASA] and pyruvate to 4-hydroxy-tetrahydrodipicolinate (HTPA). The sequence is that of 4-hydroxy-tetrahydrodipicolinate synthase from Phocaeicola vulgatus (strain ATCC 8482 / DSM 1447 / JCM 5826 / CCUG 4940 / NBRC 14291 / NCTC 11154) (Bacteroides vulgatus).